We begin with the raw amino-acid sequence, 122 residues long: Large ribosomal subunit protein uL18 (122 aa).

A compositionally biased stretch (basic residues) spans 1–22 (MDKNKKLQSKRLRRRRHVRNKL). Residues 1–25 (MDKNKKLQSKRLRRRRHVRNKLRGS) form a disordered region.

It belongs to the universal ribosomal protein uL18 family. In terms of assembly, part of the 50S ribosomal subunit; part of the 5S rRNA/L5/L18/L25 subcomplex. Contacts the 5S and 23S rRNAs.

Its function is as follows. This is one of the proteins that bind and probably mediate the attachment of the 5S RNA into the large ribosomal subunit, where it forms part of the central protuberance. The sequence is that of Large ribosomal subunit protein uL18 from Rhodopirellula baltica (strain DSM 10527 / NCIMB 13988 / SH1).